The primary structure comprises 1099 residues: Glutamine--fructose-6-phosphate aminotransferase [isomerizing] (1099 aa).

Cysteine 2 acts as the Nucleophile; for GATase activity in catalysis. A Glutamine amidotransferase type-2; first part domain is found at 2–71 (CGIIGYIGND…DIDGNIGIGH (70 aa)). The region spanning 198-253 (LRKVREKLGLTRKDVEKLCGVKEIYIVKIETGKLESIEEERLKKLCSLYGINFEEI) is the HTH cro/C1-type domain. In terms of domain architecture, DOD-type homing endonuclease spans 278 to 413 (IIGYIIGDGH…IQFLLLRFGI (136 aa)). The region spanning 571-723 (SRWATHGNVC…DGDVVVIKKK (153 aa)) is the Glutamine amidotransferase type-2; second part domain. SIS domains follow at residues 786 to 923 (LAKC…LLGR) and 948 to 1089 (TIKE…VDKP). Residue lysine 1094 is the For Fru-6P isomerization activity of the active site.

In the C-terminal section; belongs to the SIS family. GFAT subfamily. Homodimer. In terms of processing, this protein undergoes a protein self splicing that involves a post-translational excision of the intervening region (intein) followed by peptide ligation.

Its subcellular location is the cytoplasm. It catalyses the reaction D-fructose 6-phosphate + L-glutamine = D-glucosamine 6-phosphate + L-glutamate. In terms of biological role, catalyzes the first step in hexosamine metabolism, converting fructose-6P into glucosamine-6P using glutamine as a nitrogen source. The chain is Glutamine--fructose-6-phosphate aminotransferase [isomerizing] (glmS) from Methanocaldococcus jannaschii (strain ATCC 43067 / DSM 2661 / JAL-1 / JCM 10045 / NBRC 100440) (Methanococcus jannaschii).